Consider the following 236-residue polypeptide: MSPPNQDAQEGRPDSPTAEVVDVRRGMFGVSGTGDTSGYGRLVRQVVLPGSSPRPYGGYFDDIVDRLAEALRHERVEFEDAVEKVVVYRDELTLHVRRDLLPRVAQRLRDEPELRFELCLGVSGVHYPHETGRELHAVYPLQSITHNRRLRLEVSAPDSDPHIPSLFAIYPTNDWHERETYDFFGIIFDGHPALTRIEMPDDWQGHPQRKDYPLGGIPVEYKGAQIPPPDERRGYN.

Residues 1 to 20 (MSPPNQDAQEGRPDSPTAEV) form a disordered region.

This sequence belongs to the complex I 30 kDa subunit family. As to quaternary structure, NDH-1 is composed of 14 different subunits. Subunits NuoB, C, D, E, F, and G constitute the peripheral sector of the complex.

It localises to the cell membrane. The catalysed reaction is a quinone + NADH + 5 H(+)(in) = a quinol + NAD(+) + 4 H(+)(out). In terms of biological role, NDH-1 shuttles electrons from NADH, via FMN and iron-sulfur (Fe-S) centers, to quinones in the respiratory chain. The immediate electron acceptor for the enzyme in this species is believed to be a menaquinone. Couples the redox reaction to proton translocation (for every two electrons transferred, four hydrogen ions are translocated across the cytoplasmic membrane), and thus conserves the redox energy in a proton gradient. This is NADH-quinone oxidoreductase subunit C from Mycobacterium tuberculosis (strain ATCC 25177 / H37Ra).